The primary structure comprises 142 residues: COA8 family protein CBG23705, mitochondrial (142 aa).

It belongs to the COA8 family.

It localises to the mitochondrion inner membrane. Functionally, may be required for cytochrome c complex (COX) assembly and function, COX being the terminal component of the mitochondrial respiratory chain. This Caenorhabditis briggsae protein is COA8 family protein CBG23705, mitochondrial.